The following is a 318-amino-acid chain: Acetyl-coenzyme A carboxylase carboxyl transferase subunit alpha (318 aa).

Positions 41–295 (HLEKKNEELT…KQRILTDLNE (255 aa)) constitute a CoA carboxyltransferase C-terminal domain.

Belongs to the AccA family. In terms of assembly, acetyl-CoA carboxylase is a heterohexamer composed of biotin carboxyl carrier protein (AccB), biotin carboxylase (AccC) and two subunits each of ACCase subunit alpha (AccA) and ACCase subunit beta (AccD).

The protein localises to the cytoplasm. It carries out the reaction N(6)-carboxybiotinyl-L-lysyl-[protein] + acetyl-CoA = N(6)-biotinyl-L-lysyl-[protein] + malonyl-CoA. It participates in lipid metabolism; malonyl-CoA biosynthesis; malonyl-CoA from acetyl-CoA: step 1/1. Functionally, component of the acetyl coenzyme A carboxylase (ACC) complex. First, biotin carboxylase catalyzes the carboxylation of biotin on its carrier protein (BCCP) and then the CO(2) group is transferred by the carboxyltransferase to acetyl-CoA to form malonyl-CoA. This Tolumonas auensis (strain DSM 9187 / NBRC 110442 / TA 4) protein is Acetyl-coenzyme A carboxylase carboxyl transferase subunit alpha.